Consider the following 261-residue polypeptide: MSRMACKLSYDGTAFAGYQVQPGKRTVQSEVERALQEIHKGARVPVVASGRTDAGVHACGQVLHFDTELTIAPERWVSALNTHLPDDIVVTNAAMVEPDFHARYGAQAKEYRYYIQCGPFENVFRRHFAVHIKQALDVPAMQTAAKHLLGTHDFSAFCAANTTVTDKVRTITHVAVQPSEEGLLISIRGTGFLYNMVRIIVGTLLEIGTGKRVASEMKVILAGKSRNLAGKTAPAHGLCLYEVDYGQPLFVNETPGQVSMN.

Aspartate 53 serves as the catalytic Nucleophile. Position 111 (tyrosine 111) interacts with substrate.

This sequence belongs to the tRNA pseudouridine synthase TruA family. As to quaternary structure, homodimer.

It carries out the reaction uridine(38/39/40) in tRNA = pseudouridine(38/39/40) in tRNA. Functionally, formation of pseudouridine at positions 38, 39 and 40 in the anticodon stem and loop of transfer RNAs. The polypeptide is tRNA pseudouridine synthase A (Shouchella clausii (strain KSM-K16) (Alkalihalobacillus clausii)).